A 508-amino-acid chain; its full sequence is GMP synthase [glutamine-hydrolyzing] (508 aa).

The Glutamine amidotransferase type-1 domain occupies 1-189 (MILVLDFGSQ…ALLVCGCEKT (189 aa)). Cys-78 functions as the Nucleophile in the catalytic mechanism. Active-site residues include His-163 and Glu-165. One can recognise a GMPS ATP-PPase domain in the interval 190–383 (WGMQHFAQKE…LGISQDFLMR (194 aa)). 217–223 (SGGVDST) lines the ATP pocket.

Homodimer.

It catalyses the reaction XMP + L-glutamine + ATP + H2O = GMP + L-glutamate + AMP + diphosphate + 2 H(+). The protein operates within purine metabolism; GMP biosynthesis; GMP from XMP (L-Gln route): step 1/1. Functionally, catalyzes the synthesis of GMP from XMP. The protein is GMP synthase [glutamine-hydrolyzing] of Helicobacter pylori (strain Shi470).